The chain runs to 457 residues: tRNA(Ile)-lysidine synthase (457 aa).

ATP is bound at residue 27 to 32 (SGGLDS).

It belongs to the tRNA(Ile)-lysidine synthase family.

The protein resides in the cytoplasm. The enzyme catalyses cytidine(34) in tRNA(Ile2) + L-lysine + ATP = lysidine(34) in tRNA(Ile2) + AMP + diphosphate + H(+). Functionally, ligates lysine onto the cytidine present at position 34 of the AUA codon-specific tRNA(Ile) that contains the anticodon CAU, in an ATP-dependent manner. Cytidine is converted to lysidine, thus changing the amino acid specificity of the tRNA from methionine to isoleucine. In Hamiltonella defensa subsp. Acyrthosiphon pisum (strain 5AT), this protein is tRNA(Ile)-lysidine synthase.